The following is a 240-amino-acid chain: Ribonuclease 3 (240 aa).

Residues 9 to 141 enclose the RNase III domain; it reads VEEFQKKTGI…LLAAIYLDQG (133 aa). A Mg(2+)-binding site is contributed by Glu-54. Residue Asp-58 is part of the active site. Mg(2+)-binding residues include Asp-127 and Glu-130. Residue Glu-130 is part of the active site. Positions 168 to 237 constitute a DRBM domain; sequence DYKTALQEIV…ARIAYEKLLK (70 aa).

This sequence belongs to the ribonuclease III family. As to quaternary structure, homodimer. Mg(2+) is required as a cofactor.

It localises to the cytoplasm. It catalyses the reaction Endonucleolytic cleavage to 5'-phosphomonoester.. In terms of biological role, digests double-stranded RNA. Involved in the processing of primary rRNA transcript to yield the immediate precursors to the large and small rRNAs (23S and 16S). Processes some mRNAs, and tRNAs when they are encoded in the rRNA operon. Processes pre-crRNA and tracrRNA of type II CRISPR loci if present in the organism. The protein is Ribonuclease 3 of Thermotoga sp. (strain RQ2).